Consider the following 186-residue polypeptide: Putative adenylate kinase (186 aa).

Residues G10, G12, K13, T14, and S15 each contribute to the ATP site. Positions 30–53 (HLNELIKEEHLYTEVDEKRDSVVA) are NMP. Residues 108–118 (KRGYSEEKVNE) form an LID region. An ATP-binding site is contributed by R109.

This sequence belongs to the adenylate kinase family. AK6 subfamily. Interacts with uS11. Not a structural component of 40S pre-ribosomes, but transiently interacts with them by binding to uS11.

It catalyses the reaction AMP + ATP = 2 ADP. The catalysed reaction is ATP + H2O = ADP + phosphate + H(+). Broad-specificity nucleoside monophosphate (NMP) kinase that catalyzes the reversible transfer of the terminal phosphate group between nucleoside triphosphates and monophosphates. Also has ATPase activity. Involved in the late maturation steps of the 30S ribosomal particles, specifically 16S rRNA maturation. While NMP activity is not required for ribosome maturation, ATPase activity is. Associates transiently with small ribosomal subunit protein uS11. ATP hydrolysis breaks the interaction with uS11. May temporarily remove uS11 from the ribosome to enable a conformational change of the ribosomal RNA that is needed for the final maturation step of the small ribosomal subunit. The protein is Putative adenylate kinase of Methanosarcina acetivorans (strain ATCC 35395 / DSM 2834 / JCM 12185 / C2A).